Consider the following 128-residue polypeptide: Large ribosomal subunit protein uL22 (128 aa).

It belongs to the universal ribosomal protein uL22 family. In terms of assembly, part of the 50S ribosomal subunit.

Functionally, this protein binds specifically to 23S rRNA; its binding is stimulated by other ribosomal proteins, e.g. L4, L17, and L20. It is important during the early stages of 50S assembly. It makes multiple contacts with different domains of the 23S rRNA in the assembled 50S subunit and ribosome. In terms of biological role, the globular domain of the protein is located near the polypeptide exit tunnel on the outside of the subunit, while an extended beta-hairpin is found that lines the wall of the exit tunnel in the center of the 70S ribosome. In Nitrobacter winogradskyi (strain ATCC 25391 / DSM 10237 / CIP 104748 / NCIMB 11846 / Nb-255), this protein is Large ribosomal subunit protein uL22.